Consider the following 226-residue polypeptide: Elongation factor 1-delta (226 aa).

Residues 82-131 (SSVATPPVADTKASAAEDDDDDDVDLFGEETEEEKKASEERAAAVKASGK) form a disordered region. Positions 97 to 113 (AEDDDDDDVDLFGEETE) are enriched in acidic residues. Residues 114-124 (EEKKASEERAA) show a composition bias toward basic and acidic residues.

This sequence belongs to the EF-1-beta/EF-1-delta family. In terms of assembly, EF-1 is composed of 4 subunits: alpha, beta (1B-alpha=beta'), delta (1B-beta), and gamma (1B-gamma).

Its function is as follows. EF-1-beta and EF-1-beta' stimulate the exchange of GDP bound to EF-1-alpha to GTP. This Spuriopimpinella brachycarpa (Chamnamul) protein is Elongation factor 1-delta.